A 924-amino-acid polypeptide reads, in one-letter code: Protein translocase subunit SecA (924 aa).

ATP contacts are provided by residues glutamine 87, 105–109 (GEGKT), and aspartate 517. Residues 886-906 (VPAADRDPNDPSTWGKVGRNE) are disordered. Positions 908, 910, 919, and 920 each coordinate Zn(2+).

This sequence belongs to the SecA family. In terms of assembly, monomer and homodimer. Part of the essential Sec protein translocation apparatus which comprises SecA, SecYEG and auxiliary proteins SecDF-YajC and YidC. It depends on Zn(2+) as a cofactor.

Its subcellular location is the cell inner membrane. It is found in the cytoplasm. It carries out the reaction ATP + H2O + cellular proteinSide 1 = ADP + phosphate + cellular proteinSide 2.. In terms of biological role, part of the Sec protein translocase complex. Interacts with the SecYEG preprotein conducting channel. Has a central role in coupling the hydrolysis of ATP to the transfer of proteins into and across the cell membrane, serving both as a receptor for the preprotein-SecB complex and as an ATP-driven molecular motor driving the stepwise translocation of polypeptide chains across the membrane. The polypeptide is Protein translocase subunit SecA (Azorhizobium caulinodans (strain ATCC 43989 / DSM 5975 / JCM 20966 / LMG 6465 / NBRC 14845 / NCIMB 13405 / ORS 571)).